We begin with the raw amino-acid sequence, 430 residues long: ATP-dependent protease ATPase subunit HslU (430 aa).

ATP is bound by residues valine 18, 60-65 (GVGKTE), aspartate 243, glutamate 308, and arginine 380.

Belongs to the ClpX chaperone family. HslU subfamily. A double ring-shaped homohexamer of HslV is capped on each side by a ring-shaped HslU homohexamer. The assembly of the HslU/HslV complex is dependent on binding of ATP.

The protein localises to the cytoplasm. Its function is as follows. ATPase subunit of a proteasome-like degradation complex; this subunit has chaperone activity. The binding of ATP and its subsequent hydrolysis by HslU are essential for unfolding of protein substrates subsequently hydrolyzed by HslV. HslU recognizes the N-terminal part of its protein substrates and unfolds these before they are guided to HslV for hydrolysis. The chain is ATP-dependent protease ATPase subunit HslU from Caulobacter vibrioides (strain ATCC 19089 / CIP 103742 / CB 15) (Caulobacter crescentus).